The following is a 431-amino-acid chain: Lipid storage droplets surface-binding protein 1 (431 aa).

The segment at 397 to 431 (KVTGSDGGNSNHRSSRRRQDPNHYSATHNNINGVY) is disordered. Over residues 418-431 (NHYSATHNNINGVY) the composition is skewed to polar residues.

Belongs to the perilipin family.

The protein localises to the cytoplasm. It is found in the lipid droplet. Functionally, required for normal deposition of neutral lipids in the oocyte. The protein is Lipid storage droplets surface-binding protein 1 of Drosophila melanogaster (Fruit fly).